The following is a 158-amino-acid chain: 2-C-methyl-D-erythritol 2,4-cyclodiphosphate synthase (158 aa).

2 residues coordinate a divalent metal cation: Asp-8 and His-10. 4-CDP-2-C-methyl-D-erythritol 2-phosphate is bound by residues 8–10 and 34–35; these read DVH and HS. Residue His-42 coordinates a divalent metal cation. 4-CDP-2-C-methyl-D-erythritol 2-phosphate is bound by residues 56-58, 61-65, 100-106, 132-135, Phe-139, and Arg-142; these read DIG, FPDTD, AQAPKMA, and TTSE.

This sequence belongs to the IspF family. As to quaternary structure, homotrimer. Requires a divalent metal cation as cofactor.

The enzyme catalyses 4-CDP-2-C-methyl-D-erythritol 2-phosphate = 2-C-methyl-D-erythritol 2,4-cyclic diphosphate + CMP. It functions in the pathway isoprenoid biosynthesis; isopentenyl diphosphate biosynthesis via DXP pathway; isopentenyl diphosphate from 1-deoxy-D-xylulose 5-phosphate: step 4/6. Involved in the biosynthesis of isopentenyl diphosphate (IPP) and dimethylallyl diphosphate (DMAPP), two major building blocks of isoprenoid compounds. Catalyzes the conversion of 4-diphosphocytidyl-2-C-methyl-D-erythritol 2-phosphate (CDP-ME2P) to 2-C-methyl-D-erythritol 2,4-cyclodiphosphate (ME-CPP) with a corresponding release of cytidine 5-monophosphate (CMP). The sequence is that of 2-C-methyl-D-erythritol 2,4-cyclodiphosphate synthase from Aliivibrio fischeri (strain ATCC 700601 / ES114) (Vibrio fischeri).